We begin with the raw amino-acid sequence, 663 residues long: UvrABC system protein B (663 aa).

Residues 1-10 are compositionally biased toward basic and acidic residues; it reads MIDKRDDKPF. The segment at 1–23 is disordered; the sequence is MIDKRDDKPFKLKSKYKPSGDQP. One can recognise a Helicase ATP-binding domain in the interval 31 to 418; the sequence is DNIEGGEKAQ…TNTIIEQIIR (388 aa). Residue 44–51 participates in ATP binding; the sequence is GATGTGKT. The Beta-hairpin signature appears at 97–120; sequence YYDYYQPEAYVPSSDTYIEKDSSV. A Helicase C-terminal domain is found at 435–601; sequence QMDDLLGEIN…TIKKDIRGLI (167 aa). In terms of domain architecture, UVR spans 627 to 662; that stretch reads KEAINALQKQMQEAAELLDFELAAQMRDLILELKLM.

The protein belongs to the UvrB family. As to quaternary structure, forms a heterotetramer with UvrA during the search for lesions. Interacts with UvrC in an incision complex.

Its subcellular location is the cytoplasm. Its function is as follows. The UvrABC repair system catalyzes the recognition and processing of DNA lesions. A damage recognition complex composed of 2 UvrA and 2 UvrB subunits scans DNA for abnormalities. Upon binding of the UvrA(2)B(2) complex to a putative damaged site, the DNA wraps around one UvrB monomer. DNA wrap is dependent on ATP binding by UvrB and probably causes local melting of the DNA helix, facilitating insertion of UvrB beta-hairpin between the DNA strands. Then UvrB probes one DNA strand for the presence of a lesion. If a lesion is found the UvrA subunits dissociate and the UvrB-DNA preincision complex is formed. This complex is subsequently bound by UvrC and the second UvrB is released. If no lesion is found, the DNA wraps around the other UvrB subunit that will check the other stand for damage. The protein is UvrABC system protein B of Streptococcus pyogenes serotype M1.